Reading from the N-terminus, the 91-residue chain is MVATNRCCVFALLVALLLIHSLAEAGKGKEVLGKIKNKLVEVKEKIKAGWDKLTSKSEYACPVIDKFCEDHCAAKNAIGKCDDFKCQCLNS.

A signal peptide spans 1–25; that stretch reads MVATNRCCVFALLVALLLIHSLAEA. A propeptide spanning residues 26-44 is cleaved from the precursor; that stretch reads GKGKEVLGKIKNKLVEVKE. The BetaSPN-type CS-alpha/beta domain occupies 58–91; sequence EYACPVIDKFCEDHCAAKNAIGKCDDFKCQCLNS. 3 disulfide bridges follow: C61/C81, C68/C86, and C72/C88.

In terms of tissue distribution, expressed by the venom gland.

It localises to the secreted. Functionally, the full peptide presents antibacterial and cytotoxic activities. The synthetic C-terminus (AA 33-76) inhibits voltage-gated potassium channels Kv1.1/KCNA1, Kv1.2/KCNA2, and Kv1.3/KCNA3. In Tityus discrepans (Venezuelan scorpion), this protein is Potassium channel toxin TdiKIK.